The following is a 264-amino-acid chain: Thymidylate synthase (264 aa).

Arg21 provides a ligand contact to dUMP. (6R)-5,10-methylene-5,6,7,8-tetrahydrofolate is bound at residue His51. 126-127 (RR) contacts dUMP. Cys146 serves as the catalytic Nucleophile. Residues 166-169 (RSCD), Asn177, and 207-209 (HLY) contribute to the dUMP site. Asp169 contributes to the (6R)-5,10-methylene-5,6,7,8-tetrahydrofolate binding site. Residue Ala263 participates in (6R)-5,10-methylene-5,6,7,8-tetrahydrofolate binding.

This sequence belongs to the thymidylate synthase family. Bacterial-type ThyA subfamily. Homodimer.

The protein localises to the cytoplasm. It catalyses the reaction dUMP + (6R)-5,10-methylene-5,6,7,8-tetrahydrofolate = 7,8-dihydrofolate + dTMP. It functions in the pathway pyrimidine metabolism; dTTP biosynthesis. Functionally, catalyzes the reductive methylation of 2'-deoxyuridine-5'-monophosphate (dUMP) to 2'-deoxythymidine-5'-monophosphate (dTMP) while utilizing 5,10-methylenetetrahydrofolate (mTHF) as the methyl donor and reductant in the reaction, yielding dihydrofolate (DHF) as a by-product. This enzymatic reaction provides an intracellular de novo source of dTMP, an essential precursor for DNA biosynthesis. This Shewanella baltica (strain OS185) protein is Thymidylate synthase.